Reading from the N-terminus, the 187-residue chain is Ribonuclease HII (187 aa).

One can recognise an RNase H type-2 domain in the interval 1-187; the sequence is MICGTDEAGR…NPVKRLLANL (187 aa). A divalent metal cation contacts are provided by Asp-6, Glu-7, and Asp-98.

Belongs to the RNase HII family. Requires Mn(2+) as cofactor. It depends on Mg(2+) as a cofactor.

Its subcellular location is the cytoplasm. The catalysed reaction is Endonucleolytic cleavage to 5'-phosphomonoester.. Endonuclease that specifically degrades the RNA of RNA-DNA hybrids. The protein is Ribonuclease HII of Idiomarina loihiensis (strain ATCC BAA-735 / DSM 15497 / L2-TR).